Consider the following 355-residue polypeptide: 3,4-dihydroxy-2-butanone 4-phosphate synthase (355 aa).

The DHBP synthase stretch occupies residues 1 to 202; sequence MYHKRIKEAI…VSDIIQYRLN (202 aa). D-ribulose 5-phosphate is bound by residues 27–28, D32, 139–143, and E163; these read RE and RTGHT. Mg(2+) is bound at residue E28. H142 contacts Mg(2+). Positions 203-355 are GTP cyclohydrolase II-like; sequence FENLLREITR…NLHLVEKIEV (153 aa).

It in the N-terminal section; belongs to the DHBP synthase family. The protein in the C-terminal section; belongs to the GTP cyclohydrolase II family. It depends on Mg(2+) as a cofactor. Mn(2+) serves as cofactor.

It carries out the reaction D-ribulose 5-phosphate = (2S)-2-hydroxy-3-oxobutyl phosphate + formate + H(+). The protein operates within cofactor biosynthesis; riboflavin biosynthesis; 2-hydroxy-3-oxobutyl phosphate from D-ribulose 5-phosphate: step 1/1. Functionally, catalyzes the conversion of D-ribulose 5-phosphate to formate and 3,4-dihydroxy-2-butanone 4-phosphate. This chain is 3,4-dihydroxy-2-butanone 4-phosphate synthase (ribB), found in Helicobacter hepaticus (strain ATCC 51449 / 3B1).